Reading from the N-terminus, the 527-residue chain is Tyrosine--tRNA ligase, cytoplasmic (527 aa).

Residue Tyr-39 coordinates L-tyrosine. The short motif at 44 to 52 is the 'HIGH' region element; sequence TTGKPHVAY. L-tyrosine contacts are provided by Tyr-166, Gln-170, Asp-173, and Gln-188. Positions 222-226 match the 'KMSKS' region motif; it reads KMSSS. Positions 242–247 match the Nuclear localization signal motif; the sequence is KKKLKK. A disordered region spans residues 337–362; the sequence is TNAAYPNPSKAKPAEKGTKNSEPETI. Residues 348 to 358 show a composition bias toward basic and acidic residues; it reads KPAEKGTKNSE. The tRNA-binding domain maps to 363 to 467; sequence VPSRLDIRVG…AECCAGERVY (105 aa).

Belongs to the class-I aminoacyl-tRNA synthetase family. In terms of assembly, homodimer.

The protein localises to the cytoplasm. The protein resides in the nucleus. The catalysed reaction is tRNA(Tyr) + L-tyrosine + ATP = L-tyrosyl-tRNA(Tyr) + AMP + diphosphate + H(+). In terms of biological role, catalyzes the attachment of tyrosine to tRNA(Tyr) in a two-step reaction: tyrosine is first activated by ATP to form Tyr-AMP and then transferred to the acceptor end of tRNA(Tyr). The protein is Tyrosine--tRNA ligase, cytoplasmic (YARS1) of Gallus gallus (Chicken).